We begin with the raw amino-acid sequence, 160 residues long: Twist-related protein 2 (160 aa).

Residues 1–63 (MEEGSSSPVS…GSPSAQSFEE (63 aa)) are disordered. The span at 27-37 (KRFGRKRRYSK) shows a compositional bias: basic residues. One can recognise a bHLH domain in the interval 66–117 (SQRILANVRERQRTQSLNEAFAALRKIIPTLPSDKLSKIQTLKLAARYIDFL).

In terms of assembly, efficient DNA binding requires dimerization with another bHLH protein. Forms a heterodimer with TCF3/E12. Also interacts with MEF2C. As to expression, in the embryo, highly expressed in chondrogenic cells. In embryonic skin, expressed in the undifferentiated mesenchymal layer beneath the epidermis which later develops into the dermis. Expressed in early myeloid cells but not in lymphoid cells in the liver. Expression also detected in the secretory ependymal epithelium of the choroid plexus primordium. In the adult, expressed in secreting glandular tissues and tubules.

The protein resides in the nucleus. It localises to the cytoplasm. Functionally, binds to the E-box consensus sequence 5'-CANNTG-3' as a heterodimer and inhibits transcriptional activation by MYOD1, MYOG, MEF2A and MEF2C. Also represses expression of pro-inflammatory cytokines such as TNFA and IL1B. Involved in postnatal glycogen storage and energy metabolism. Inhibits the premature or ectopic differentiation of preosteoblast cells during osteogenesis, possibly by changing the internal signal transduction response of osteoblasts to external growth factors. The sequence is that of Twist-related protein 2 (TWIST2) from Homo sapiens (Human).